The following is a 95-amino-acid chain: Aspartyl/glutamyl-tRNA(Asn/Gln) amidotransferase subunit C (95 aa).

The protein belongs to the GatC family. Heterotrimer of A, B and C subunits.

It carries out the reaction L-glutamyl-tRNA(Gln) + L-glutamine + ATP + H2O = L-glutaminyl-tRNA(Gln) + L-glutamate + ADP + phosphate + H(+). It catalyses the reaction L-aspartyl-tRNA(Asn) + L-glutamine + ATP + H2O = L-asparaginyl-tRNA(Asn) + L-glutamate + ADP + phosphate + 2 H(+). Allows the formation of correctly charged Asn-tRNA(Asn) or Gln-tRNA(Gln) through the transamidation of misacylated Asp-tRNA(Asn) or Glu-tRNA(Gln) in organisms which lack either or both of asparaginyl-tRNA or glutaminyl-tRNA synthetases. The reaction takes place in the presence of glutamine and ATP through an activated phospho-Asp-tRNA(Asn) or phospho-Glu-tRNA(Gln). This is Aspartyl/glutamyl-tRNA(Asn/Gln) amidotransferase subunit C from Prochlorococcus marinus (strain NATL1A).